The chain runs to 248 residues: Proteasome subunit alpha type-7 (248 aa).

Ser130 is a glycosylation site (O-linked (GlcNAc) serine). Phosphotyrosine; by ABL1 and ABL2 is present on Tyr153. Lys227 carries the N6-acetyllysine modification.

The protein belongs to the peptidase T1A family. As to quaternary structure, the 26S proteasome consists of a 20S proteasome core and two 19S regulatory subunits. The 20S proteasome core is a barrel-shaped complex made of 28 subunits that are arranged in four stacked rings. The two outer rings are each formed by seven alpha subunits, and the two inner rings are formed by seven beta subunits. The proteolytic activity is exerted by three beta-subunits PSMB5, PSMB6 and PSMB7. PSMA7 interacts directly with the PSMG1-PSMG2 heterodimer which promotes 20S proteasome assembly. Interacts with HIF1A. Interacts with RAB7A. Interacts with PRKN. Interacts with ABL1 and ABL2. Interacts with EMAP2. Interacts with MAVS. Post-translationally, phosphorylation by ABL1 or ABL2 leads to an inhibition of proteasomal activity and cell cycle transition blocks. In terms of tissue distribution, detected in liver (at protein level).

The protein localises to the cytoplasm. The protein resides in the nucleus. Functionally, component of the 20S core proteasome complex involved in the proteolytic degradation of most intracellular proteins. This complex plays numerous essential roles within the cell by associating with different regulatory particles. Associated with two 19S regulatory particles, forms the 26S proteasome and thus participates in the ATP-dependent degradation of ubiquitinated proteins. The 26S proteasome plays a key role in the maintenance of protein homeostasis by removing misfolded or damaged proteins that could impair cellular functions, and by removing proteins whose functions are no longer required. Associated with the PA200 or PA28, the 20S proteasome mediates ubiquitin-independent protein degradation. This type of proteolysis is required in several pathways including spermatogenesis (20S-PA200 complex) or generation of a subset of MHC class I-presented antigenic peptides (20S-PA28 complex). The polypeptide is Proteasome subunit alpha type-7 (Psma7) (Mus musculus (Mouse)).